The chain runs to 189 residues: MKRIVLYGGQFNPIHTAHMIVASEVFHELQPDEFYFLPSFMSPLKKHHDFIDVQHRLTMIQMVIDELGFGDICDDEIKRGGQSYTYDTIKAFKEQHKDSELYFVIGTDQYNQLEKWYQIEYLKEMVTFVVVNRDKNSQNVENGMIAIQIPRVDISSTMIRQRVSKGKSIQVLVPKSVENYIKGEGLYEH.

Belongs to the NadD family.

The enzyme catalyses nicotinate beta-D-ribonucleotide + ATP + H(+) = deamido-NAD(+) + diphosphate. It functions in the pathway cofactor biosynthesis; NAD(+) biosynthesis; deamido-NAD(+) from nicotinate D-ribonucleotide: step 1/1. Its function is as follows. Catalyzes the reversible adenylation of nicotinate mononucleotide (NaMN) to nicotinic acid adenine dinucleotide (NaAD). This chain is Probable nicotinate-nucleotide adenylyltransferase, found in Staphylococcus aureus (strain MRSA252).